A 116-amino-acid chain; its full sequence is Large ribosomal subunit protein bL19 (116 aa).

This sequence belongs to the bacterial ribosomal protein bL19 family.

In terms of biological role, this protein is located at the 30S-50S ribosomal subunit interface and may play a role in the structure and function of the aminoacyl-tRNA binding site. The protein is Large ribosomal subunit protein bL19 of Mannheimia succiniciproducens (strain KCTC 0769BP / MBEL55E).